Here is a 345-residue protein sequence, read N- to C-terminus: UDP-N-acetylenolpyruvoylglucosamine reductase (345 aa).

The region spanning 59–254 (VGGPAACLAR…RKATQPLGRP (196 aa)) is the FAD-binding PCMH-type domain. The active site involves Arg209. The Proton donor role is filled by Cys258. The active site involves Glu328.

This sequence belongs to the MurB family. FAD is required as a cofactor.

The protein localises to the cytoplasm. The catalysed reaction is UDP-N-acetyl-alpha-D-muramate + NADP(+) = UDP-N-acetyl-3-O-(1-carboxyvinyl)-alpha-D-glucosamine + NADPH + H(+). It functions in the pathway cell wall biogenesis; peptidoglycan biosynthesis. Its function is as follows. Cell wall formation. The polypeptide is UDP-N-acetylenolpyruvoylglucosamine reductase (Syntrophobacter fumaroxidans (strain DSM 10017 / MPOB)).